Consider the following 223-residue polypeptide: Pre-hexon-linking protein VIII (223 aa).

The residue at position 64 (Thr-64) is a Phosphothreonine; by host. The propeptide occupies 112 to 153 (GALAPRDLYALTLRGRGIQLNEDLPLSASTLRPDGIFQLGGG). The residue at position 170 (Ser-170) is a Phosphoserine; by host.

Belongs to the adenoviridae hexon-linking protein family. As to quaternary structure, interacts with the peripentonal hexons as well as the hexons in the facets. Part of a complex composed of the core-capsid bridging protein, the endosome lysis protein VI and the hexon-linking protein VIII; these interactions bridge the virus core to the capsid. Cleaved by the viral protease during virion maturation. May cause the middle segment to be shed from the capsid.

It localises to the virion. The protein localises to the host nucleus. Structural component of the virion that acts as a cement protein on the capsid interior and which glue the peripentonal hexons and group-of-nine hexons together. In Porcine adenovirus A serotype 3 (PAdV-3), this protein is Pre-hexon-linking protein VIII.